A 283-amino-acid polypeptide reads, in one-letter code: Release factor glutamine methyltransferase (283 aa).

S-adenosyl-L-methionine contacts are provided by residues 121–125 (GTGSG), Asp-144, and Asn-188. Position 188–191 (188–191 (NPPY)) interacts with substrate.

This sequence belongs to the protein N5-glutamine methyltransferase family. PrmC subfamily.

It catalyses the reaction L-glutaminyl-[peptide chain release factor] + S-adenosyl-L-methionine = N(5)-methyl-L-glutaminyl-[peptide chain release factor] + S-adenosyl-L-homocysteine + H(+). Methylates the class 1 translation termination release factors RF1/PrfA and RF2/PrfB on the glutamine residue of the universally conserved GGQ motif. The sequence is that of Release factor glutamine methyltransferase from Bacillus anthracis.